A 243-amino-acid chain; its full sequence is Carboxy-S-adenosyl-L-methionine synthase (243 aa).

S-adenosyl-L-methionine-binding positions include Tyr35, 68 to 70 (GCS), 92 to 93 (DN), and Arg199.

It belongs to the class I-like SAM-binding methyltransferase superfamily. Cx-SAM synthase family. In terms of assembly, homodimer.

It catalyses the reaction prephenate + S-adenosyl-L-methionine = carboxy-S-adenosyl-L-methionine + 3-phenylpyruvate + H2O. Catalyzes the conversion of S-adenosyl-L-methionine (SAM) to carboxy-S-adenosyl-L-methionine (Cx-SAM). This is Carboxy-S-adenosyl-L-methionine synthase from Helicobacter pylori (strain ATCC 700392 / 26695) (Campylobacter pylori).